Here is a 293-residue protein sequence, read N- to C-terminus: MSALDNRLFAKMNGIGNEIVVVDLRDQPAPVTPDDARAVAAHVPYDQLMLLQPARLPGTEAFVRIYNNDGSESGACGNGMRCVARQLFAGSDQQGLTFETRAGLLNCWRGPAEGLFTVDMGAPKFGWQDIPLAEEFRDTRGIELQIGPIDAPILHTPSVVSMGNPHAIFWVDDIHAYDLGQFGPLLENHPIFPERANITLAHIVDRQHITMRTWERGAGLTRACGSAACATAVAAARLRRTDRIVEMTLPGGKLTIEWREGDDHVLMTGGAELEFEGRFDPALFVGACDTTAA.

Substrate is bound by residues N17, Q47, and N67. The active-site Proton donor is the C76. Substrate is bound by residues G77 to N78, N164, N197, and E215 to R216. C224 (proton acceptor) is an active-site residue. G225 to S226 contributes to the substrate binding site.

Belongs to the diaminopimelate epimerase family. In terms of assembly, homodimer.

Its subcellular location is the cytoplasm. It catalyses the reaction (2S,6S)-2,6-diaminopimelate = meso-2,6-diaminopimelate. It functions in the pathway amino-acid biosynthesis; L-lysine biosynthesis via DAP pathway; DL-2,6-diaminopimelate from LL-2,6-diaminopimelate: step 1/1. Functionally, catalyzes the stereoinversion of LL-2,6-diaminopimelate (L,L-DAP) to meso-diaminopimelate (meso-DAP), a precursor of L-lysine and an essential component of the bacterial peptidoglycan. The polypeptide is Diaminopimelate epimerase (Rhodopseudomonas palustris (strain HaA2)).